Consider the following 539-residue polypeptide: Chaperonin GroEL (539 aa).

ATP is bound by residues 29 to 32, 86 to 90, G413, 477 to 479, and D493; these read TLGP, DGTTT, and DAL.

This sequence belongs to the chaperonin (HSP60) family. In terms of assembly, forms a cylinder of 14 subunits composed of two heptameric rings stacked back-to-back. Interacts with the co-chaperonin GroES.

It is found in the cytoplasm. The enzyme catalyses ATP + H2O + a folded polypeptide = ADP + phosphate + an unfolded polypeptide.. Functionally, together with its co-chaperonin GroES, plays an essential role in assisting protein folding. The GroEL-GroES system forms a nano-cage that allows encapsulation of the non-native substrate proteins and provides a physical environment optimized to promote and accelerate protein folding. This chain is Chaperonin GroEL, found in Clostridium perfringens (strain ATCC 13124 / DSM 756 / JCM 1290 / NCIMB 6125 / NCTC 8237 / Type A).